The primary structure comprises 441 residues: Mitochondrial distribution and morphology protein 12 (441 aa).

The region spanning 1–441 (MSIDIDWERA…VYPSFWTFLV (441 aa)) is the SMP-LTD domain. 2 disordered regions span residues 68-89 (DFYEDGDEDLSVSSEEQSPMRE) and 183-289 (RAVT…RMRE). 2 stretches are compositionally biased toward polar residues: residues 226–245 (SRPSTANTGNTLLSRGSVST) and 253–263 (PSQTLLANNPG).

It belongs to the MDM12 family. Component of the ER-mitochondria encounter structure (ERMES) or MDM complex, composed of MMM1, MDM10, MDM12 and MDM34. An MMM1 homodimer associates with one molecule of MDM12 on each side in a pairwise head-to-tail manner, and the SMP-LTD domains of MMM1 and MDM12 generate a continuous hydrophobic tunnel for phospholipid trafficking.

It is found in the mitochondrion outer membrane. The protein resides in the endoplasmic reticulum membrane. In terms of biological role, component of the ERMES/MDM complex, which serves as a molecular tether to connect the endoplasmic reticulum (ER) and mitochondria. Components of this complex are involved in the control of mitochondrial shape and protein biogenesis, and function in nonvesicular lipid trafficking between the ER and mitochondria. MDM12 is required for the interaction of the ER-resident membrane protein MMM1 and the outer mitochondrial membrane-resident beta-barrel protein MDM10. The MDM12-MMM1 subcomplex functions in the major beta-barrel assembly pathway that is responsible for biogenesis of all mitochondrial outer membrane beta-barrel proteins, and acts in a late step after the SAM complex. The MDM10-MDM12-MMM1 subcomplex further acts in the TOM40-specific pathway after the action of the MDM12-MMM1 complex. Essential for establishing and maintaining the structure of mitochondria and maintenance of mtDNA nucleoids. This is Mitochondrial distribution and morphology protein 12 from Paracoccidioides lutzii (strain ATCC MYA-826 / Pb01) (Paracoccidioides brasiliensis).